The sequence spans 320 residues: Retron Ec86 reverse transcriptase (320 aa).

A Reverse transcriptase domain is found at 34 to 248 (VETLRLLIYT…SQRKVTGLVI (215 aa)). 3 residues coordinate Mg(2+): aspartate 119, aspartate 197, and aspartate 198. The tract at residues 230-320 (KKTCISGPRS…GKNPLNKAKT (91 aa)) is necessary and required for recognition and binding of RNA.

This sequence belongs to the bacterial reverse transcriptase family.

The catalysed reaction is DNA(n) + a 2'-deoxyribonucleoside 5'-triphosphate = DNA(n+1) + diphosphate. Its function is as follows. Reverse transcriptase (RT) component of antiviral defense system retron Ec86, composed of a non-coding RNA (ncRNA), a ribosyltransferase/DNA-binding protein and this RT. Expression of the 3-gene retron confers protection against bacteriophage T5. At multiplicity of infection (MOI) of 0.02 cultures grow normally when infected with T5 without collapsing, at MOI 2 cultures enter growth stasis. Responsible for synthesis of msDNA (a branched molecule with RNA linked by a 2',5'-phosphodiester bond to ssDNA). The retron transcript serves as primer (from a conserved internal G residue) and template for the reaction, and codes for the RT. Recognizes only its cognate RNA as a primer template. Overexpression of the ncRNA and RT (without the ribosyltransferase), which leads to increased levels of msDNA, is mutagenic in vivo. This may be due to a mismatch in the msDNA stem which binds and sequesters MutS and/or MutL. The sequence is that of Retron Ec86 reverse transcriptase from Escherichia coli.